A 432-amino-acid chain; its full sequence is Phytase AppA (432 aa).

Positions Met-1 to Ala-22 are cleaved as a signal peptide. Arg-38 is a 1D-myo-inositol hexakisphosphate binding site. The active-site Nucleophile is His-39. 1D-myo-inositol hexakisphosphate-binding positions include Arg-42–Lys-46 and Arg-114. Disulfide bonds link Cys-99/Cys-130, Cys-155/Cys-430, Cys-200/Cys-210, and Cys-404/Cys-413. Residues Arg-289 and His-325–Thr-327 each bind 1D-myo-inositol hexakisphosphate. Asp-326 (proton donor) is an active-site residue.

The protein belongs to the histidine acid phosphatase family. As to quaternary structure, monomer.

The protein localises to the periplasm. It catalyses the reaction 1D-myo-inositol hexakisphosphate + H2O = 1D-myo-inositol 1,2,3,4,5-pentakisphosphate + phosphate. The catalysed reaction is 1D-myo-inositol 1,2,3,4,5-pentakisphosphate + H2O = 1D-myo-inositol 2,3,4,5-tetrakisphosphate + phosphate. The enzyme catalyses 1D-myo-inositol 2,3,4,5-tetrakisphosphate + H2O = 1D-myo-inositol 2,4,5-triphosphate + phosphate. It carries out the reaction 1D-myo-inositol 2,4,5-triphosphate + H2O = 1D-myo-inositol 2,5-bisphosphate + phosphate. It catalyses the reaction 1D-myo-inositol 2,5-bisphosphate + H2O = 1D-myo-inositol 2-phosphate + phosphate. The catalysed reaction is GTP + H2O = GDP + phosphate + H(+). With respect to regulation, contains three consecutive and one non-consecutive disulfide bonds and shows a strong dependence on DsbC for its full activity. Competitively inhibited by tartaric acid and by sodium fluorid. Catalyzes the hydrolysis of phytate (or myo-inositol hexakisphosphate, an indigestible organic form of phosphorus that is found in many plant tissues) to myo-inositol and inorganic phosphate. Dephosphorylates phytate in a stereospecific way by sequential removal of phosphate groups to produce myo-inositol 2-monophosphate. Also shows phosphoanhydride phosphatase activity and hydrolyzes the distal phosphoryl residues of GTP, the 5'-beta-phosphoryl residue of the regulatory nucleotide ppGpp and tripolyphosphates. Does not split most phosphomonoesters with the exception of the synthetic substrate p-nitrophenyl phosphate (pNPP), 2,3-bisphosphoglycerate and fructose 1,6-bisphosphate. This Escherichia coli (strain K12) protein is Phytase AppA.